We begin with the raw amino-acid sequence, 664 residues long: E3 ubiquitin-protein ligase CHFR (664 aa).

The disordered stretch occupies residues 1–21; that stretch reads MERPEEGKQSPPPQPWGRLLR. Residues 38-89 form the FHA domain; the sequence is WTIGRRRGCDLSFPSNKLVSGDHCRIVVDEKSGQVTLEDTSTSGTVINKLKV. Positions 142–267 are disordered; sequence FHGTKDTSGA…KKMRGDGDLD (126 aa). The span at 186-198 shows a compositional bias: low complexity; that stretch reads PTASASSTEPSPA. Ser244 bears the Phosphoserine mark. Basic and acidic residues predominate over residues 254–264; sequence EPVKKKMRGDG. Residues 304 to 343 form an RING-type zinc finger; sequence CIICQDLLHDCVSLQPCMHTFCAACYSGWMERSSLCPTCR. Position 386 is a phosphothreonine (Thr386). 2 disordered regions span residues 388–417 and 439–461; these read DMLQ…VDSE and AQPP…GDAP. The span at 400-417 shows a compositional bias: acidic residues; it reads DEEGSSEDLLELSDVDSE. A PBZ-type zinc finger spans residues 633-655; sequence PDCYWGRNCRTQVKAHHAMKFNH.

The protein belongs to the CHFR family. Interacts with HDAC1 and HDAC2. Interacts with PML (with sumoylated form of PML). Poly-ADP-ribosylated. In addition to binding non covalently poly(ADP-ribose) via its PBZ-type zinc finger, the protein is also covalently poly-ADP-ribosylated by PARP1. In terms of processing, autoubiquitinated; may regulate its cellular level. Post-translationally, phosphorylated by PKB. Phosphorylation may affect its E3 ligase activity. In terms of tissue distribution, ubiquitous.

The protein resides in the nucleus. Its subcellular location is the PML body. The catalysed reaction is S-ubiquitinyl-[E2 ubiquitin-conjugating enzyme]-L-cysteine + [acceptor protein]-L-lysine = [E2 ubiquitin-conjugating enzyme]-L-cysteine + N(6)-ubiquitinyl-[acceptor protein]-L-lysine.. It functions in the pathway protein modification; protein ubiquitination. In terms of biological role, E3 ubiquitin-protein ligase that functions in the antephase checkpoint by actively delaying passage into mitosis in response to microtubule poisons. Acts in early prophase before chromosome condensation, when the centrosome move apart from each other along the periphery of the nucleus. Probably involved in signaling the presence of mitotic stress caused by microtubule poisons by mediating the 'Lys-48'-linked ubiquitination of target proteins, leading to their degradation by the proteasome. Promotes the ubiquitination and subsequent degradation of AURKA and PLK1. Probably acts as a tumor suppressor, possibly by mediating the polyubiquitination of HDAC1, leading to its degradation. May also promote the formation of 'Lys-63'-linked polyubiquitin chains and functions with the specific ubiquitin-conjugating UBC13-MMS2 (UBE2N-UBE2V2) heterodimer. Substrates that are polyubiquitinated at 'Lys-63' are usually not targeted for degradation, but are rather involved in signaling cellular stress. This is E3 ubiquitin-protein ligase CHFR (CHFR) from Homo sapiens (Human).